The following is a 201-amino-acid chain: Troponin I (201 aa).

Residue Ala-1 is modified to N-acetylalanine. Residues 1-33 (ADKAKAAEEAKKKQDDIDRKKAEVRKRLEEQSL) are compositionally biased toward basic and acidic residues. The segment at 1 to 45 (ADKAKAAEEAKKKQDDIDRKKAEVRKRLEEQSLKKQKKGFMTPER) is disordered. Positions 108 to 117 (IESDKYDVEL) are troponin T-interaction. The tract at residues 135-148 (DLRGKFIKPTLKKV) is actin-binding. N6,N6,N6-trimethyllysine occurs at positions 142 and 146. The segment at 182–201 (EDDKGATEGDGPAAEEVAAE) is disordered.

Belongs to the troponin I family.

In terms of biological role, troponin I is the actomyosin ATPase inhibitory subunit present in the thin filament regulatory complex. The protein is Troponin I of Astacus leptodactylus (Turkish narrow-clawed crayfish).